The chain runs to 428 residues: Adenylosuccinate synthetase (428 aa).

GTP-binding positions include 12–18 (GDEGKGK) and 40–42 (GHT). The active-site Proton acceptor is Asp-13. 2 residues coordinate Mg(2+): Asp-13 and Gly-40. IMP-binding positions include 13–16 (DEGK), 38–41 (NAGH), Thr-130, Arg-144, Gln-225, Thr-240, and Arg-304. Residue His-41 is the Proton donor of the active site. 300–306 (ATTGRPR) provides a ligand contact to substrate. Residues Arg-306, 332 to 334 (KLD), and 415 to 417 (SVG) contribute to the GTP site.

The protein belongs to the adenylosuccinate synthetase family. As to quaternary structure, homodimer. Requires Mg(2+) as cofactor.

It is found in the cytoplasm. The enzyme catalyses IMP + L-aspartate + GTP = N(6)-(1,2-dicarboxyethyl)-AMP + GDP + phosphate + 2 H(+). It participates in purine metabolism; AMP biosynthesis via de novo pathway; AMP from IMP: step 1/2. Its function is as follows. Plays an important role in the de novo pathway of purine nucleotide biosynthesis. Catalyzes the first committed step in the biosynthesis of AMP from IMP. The protein is Adenylosuccinate synthetase of Lawsonia intracellularis (strain PHE/MN1-00).